Here is a 147-residue protein sequence, read N- to C-terminus: Cytochrome c-type biogenesis protein CcmE (147 aa).

Over 1-9 (MKNLKKQRR) the chain is Cytoplasmic. A helical; Signal-anchor for type II membrane protein transmembrane segment spans residues 10–30 (IQVIALATVALVLSTALIGYA). The Periplasmic portion of the chain corresponds to 31 to 147 (MRDGINFFRA…EQGVYKGTEG (117 aa)). Residues His123 and Tyr127 each coordinate heme.

This sequence belongs to the CcmE/CycJ family.

The protein resides in the cell inner membrane. In terms of biological role, heme chaperone required for the biogenesis of c-type cytochromes. Transiently binds heme delivered by CcmC and transfers the heme to apo-cytochromes in a process facilitated by CcmF and CcmH. In Roseobacter denitrificans (strain ATCC 33942 / OCh 114) (Erythrobacter sp. (strain OCh 114)), this protein is Cytochrome c-type biogenesis protein CcmE.